A 443-amino-acid chain; its full sequence is tRNA(Ile2) 2-agmatinylcytidine synthetase TiaS (443 aa).

Belongs to the TiaS family.

It localises to the cytoplasm. It catalyses the reaction cytidine(34) in tRNA(Ile2) + agmatine + ATP + H2O = 2-agmatinylcytidine(34) in tRNA(Ile2) + AMP + 2 phosphate + 2 H(+). Functionally, ATP-dependent agmatine transferase that catalyzes the formation of 2-agmatinylcytidine (agm2C) at the wobble position (C34) of tRNA(Ile2), converting the codon specificity from AUG to AUA. This Saccharolobus islandicus (strain L.S.2.15 / Lassen #1) (Sulfolobus islandicus) protein is tRNA(Ile2) 2-agmatinylcytidine synthetase TiaS.